The following is an 836-amino-acid chain: Glutamate receptor ionotropic, kainate 1 (836 aa).

The first 30 residues, 1-30 (MERGTVLIQPGLWTRDTSWTLLYFLCYILP), serve as a signal peptide directing secretion. Residues 31 to 561 (QTSPQVLRIG…VFSFLNPLSP (531 aa)) lie on the Extracellular side of the membrane. N-linked (GlcNAc...) asparagine glycans are attached at residues N68, N74, N276, N379, N413, N424, and N431. P516, T518, and R523 together coordinate L-glutamate. An N-linked (GlcNAc...) asparagine glycan is attached at N546. Residues 562-582 (DIWMYVLLACLGVSCVLFVIA) traverse the membrane as a helical segment. At 583–638 (RFTPYEWYNPHPCNPDSDVVENNFTLLNSFWFGVGALMQQGSELMPKALSTRIVGG) the chain is on the cytoplasmic side. A helical membrane pass occupies residues 639–659 (IWWFFTLIIISSYTANLAAFL). At 660-721 (TVERMESPID…RQPSALGVEN (62 aa)) the chain is on the extracellular side. L-glutamate-binding residues include S689 and T690. Residues 722–742 (IGGIFIVLAAGLVLSVFVAIG) traverse the membrane as a helical segment. At 743–836 (EFIYKSRKNN…RRTQRKETVA (94 aa)) the chain is on the cytoplasmic side.

This sequence belongs to the glutamate-gated ion channel (TC 1.A.10.1) family. GRIK1 subfamily. Homotetramer or heterotetramer of pore-forming glutamate receptor subunits. Tetramers may be formed by the dimerization of dimers. Can form functional heteromeric receptors with GRIK4 and GRIK5. Interacts with KLHL17. Most abundant in the cerebellum. Also present in the suprachiasmatic nuclei of the hypothalamus.

The protein resides in the cell membrane. Its subcellular location is the postsynaptic cell membrane. The enzyme catalyses Ca(2+)(in) = Ca(2+)(out). Ionotropic glutamate receptor that functions as a cation-permeable ligand-gated ion channel, gated by L-glutamate and the glutamatergic agonist kainic acid. L-glutamate acts as an excitatory neurotransmitter at many synapses in the central nervous system. Binding of the excitatory neurotransmitter L-glutamate induces a conformation change, leading to the opening of the cation channel, and thereby converts the chemical signal to an electrical impulse. The receptor then desensitizes rapidly and enters a transient inactive state, characterized by the presence of bound agonist. This chain is Glutamate receptor ionotropic, kainate 1 (Grik1), found in Mus musculus (Mouse).